Reading from the N-terminus, the 95-residue chain is Small ribosomal subunit protein bS18 (95 aa).

Belongs to the bacterial ribosomal protein bS18 family. As to quaternary structure, part of the 30S ribosomal subunit. Forms a tight heterodimer with protein bS6.

Functionally, binds as a heterodimer with protein bS6 to the central domain of the 16S rRNA, where it helps stabilize the platform of the 30S subunit. The chain is Small ribosomal subunit protein bS18 from Rickettsia typhi (strain ATCC VR-144 / Wilmington).